Consider the following 132-residue polypeptide: Ribonuclease P protein component (132 aa).

It belongs to the RnpA family. Consists of a catalytic RNA component (M1 or rnpB) and a protein subunit.

The enzyme catalyses Endonucleolytic cleavage of RNA, removing 5'-extranucleotides from tRNA precursor.. Its function is as follows. RNaseP catalyzes the removal of the 5'-leader sequence from pre-tRNA to produce the mature 5'-terminus. It can also cleave other RNA substrates such as 4.5S RNA. The protein component plays an auxiliary but essential role in vivo by binding to the 5'-leader sequence and broadening the substrate specificity of the ribozyme. This is Ribonuclease P protein component from Marinobacter nauticus (strain ATCC 700491 / DSM 11845 / VT8) (Marinobacter aquaeolei).